The sequence spans 310 residues: Junctional adhesion molecule C (310 aa).

The signal sequence occupies residues 1-31 (MALSRRLRLRLCARLPDFFLLLLFRGCVIEA). Residues 32–241 (VNLKSSNRNP…GQDMEVYDLN (210 aa)) are Extracellular-facing. The 93-residue stretch at 35–127 (KSSNRNPVVH…VALNDRKEVD (93 aa)) folds into the Ig-like V-type domain. 2 cysteine pairs are disulfide-bonded: cysteine 53–cysteine 115 and cysteine 160–cysteine 219. N-linked (GlcNAc...) asparagine glycans are attached at residues asparagine 104 and asparagine 192. The region spanning 139-236 (PVAPVCRVPK…AARCEGQDME (98 aa)) is the Ig-like C2-type domain. Residues 242–262 (IAGIIGGVLVVLIVLAVITMG) traverse the membrane as a helical segment. The Cytoplasmic segment spans residues 263–310 (ICCAYRRGCFISSKQDGESYKSPGKHEGVNYIRTSEEGDFRHKSSFVI). Residues cysteine 264 and cysteine 265 are each lipidated (S-palmitoyl cysteine).

It belongs to the immunoglobulin superfamily. Interacts with ITGAM. Interacts with GORASP2. Proteolytically cleaved from endothelial cells surface into a soluble form by ADAM10 and ADAM17; the release of soluble JAM3 is increased by pro-inflammatory factors. In terms of processing, S-palmitoylated by ZDHHC7. S-palmitoylation promotes expression at tight junctions.

The protein localises to the cell membrane. The protein resides in the cell junction. It localises to the desmosome. Its subcellular location is the tight junction. It is found in the secreted. Functionally, junctional adhesion protein that mediates heterotypic cell-cell interactions with its cognate receptor JAM2 to regulate different cellular processes. Plays a role in homing and mobilization of hematopoietic stem and progenitor cells within the bone marrow. At the surface of bone marrow stromal cells, it contributes to the retention of the hematopoietic stem and progenitor cells expressing JAM3. Plays a central role in leukocytes extravasation by facilitating transmigration through the endothelium. Plays a role in spermatogenesis where JAM2 and JAM3, which are respectively expressed by Sertoli and germ cells, mediate an interaction between both cell types and play an essential role in the anchorage of germ cells onto Sertoli cells and the assembly of cell polarity complexes during spermatid differentiation. Also functions as a counter-receptor for ITGAM, mediating leukocyte-platelet interactions and is involved in the regulation of transepithelial migration of polymorphonuclear neutrophils (PMN). Plays a role in angiogenesis. Plays a role in the regulation of cell migration. During myogenesis, it is involved in myocyte fusion. Promotes chemotaxis of vascular endothelial cells and stimulates angiogenesis. The chain is Junctional adhesion molecule C (Jam3) from Rattus norvegicus (Rat).